The primary structure comprises 1533 residues: Glycogen debranching enzyme (1533 aa).

A Phosphoserine modification is found at Ser-64. Residues Asp-527, His-530, and Asp-628 contribute to the active site.

This sequence belongs to the glycogen debranching enzyme family. Monomer. Interacts with NHLRC1/malin. Ubiquitinated. In terms of tissue distribution, ubiquitous. Expressed in striated skeletal muscle, heart, liver, spleen, skin, spinal cord, lung, kidney and testicle.

It localises to the cytoplasm. The enzyme catalyses Transfers a segment of a (1-&gt;4)-alpha-D-glucan to a new position in an acceptor, which may be glucose or a (1-&gt;4)-alpha-D-glucan.. It catalyses the reaction Hydrolysis of (1-&gt;6)-alpha-D-glucosidic branch linkages in glycogen phosphorylase limit dextrin.. Functionally, multifunctional enzyme acting as 1,4-alpha-D-glucan:1,4-alpha-D-glucan 4-alpha-D-glycosyltransferase and amylo-1,6-glucosidase in glycogen degradation. The protein is Glycogen debranching enzyme of Equus caballus (Horse).